The following is a 92-amino-acid chain: Large ribosomal subunit protein eL43 (92 aa).

Zn(2+)-binding residues include cysteine 39, cysteine 42, cysteine 57, and cysteine 60. A C4-type zinc finger spans residues 39–60 (CSFCGKTKMKRRAVGIWHCGSC).

Belongs to the eukaryotic ribosomal protein eL43 family. Component of the large ribosomal subunit.

Its subcellular location is the cytoplasm. Its function is as follows. Component of the large ribosomal subunit. The ribosome is a large ribonucleoprotein complex responsible for the synthesis of proteins in the cell. This is Large ribosomal subunit protein eL43 (Rpl37a) from Mus musculus (Mouse).